Consider the following 383-residue polypeptide: Chaperone protein DnaJ (383 aa).

The region spanning 5–69 (DYYDILGVSK…QKRAQYDQFG (65 aa)) is the J domain. A CR-type zinc finger spans residues 138-222 (GKTTTIKYDR…CHGAGHVHER (85 aa)). 8 residues coordinate Zn(2+): Cys-151, Cys-154, Cys-168, Cys-171, Cys-194, Cys-197, Cys-210, and Cys-213. CXXCXGXG motif repeat units lie at residues 151 to 158 (CKTCHGTG), 168 to 175 (CPRCHGAG), 194 to 201 (CPECNGTG), and 210 to 217 (CDTCHGAG).

The protein belongs to the DnaJ family. Homodimer. It depends on Zn(2+) as a cofactor.

The protein localises to the cytoplasm. Functionally, participates actively in the response to hyperosmotic and heat shock by preventing the aggregation of stress-denatured proteins and by disaggregating proteins, also in an autonomous, DnaK-independent fashion. Unfolded proteins bind initially to DnaJ; upon interaction with the DnaJ-bound protein, DnaK hydrolyzes its bound ATP, resulting in the formation of a stable complex. GrpE releases ADP from DnaK; ATP binding to DnaK triggers the release of the substrate protein, thus completing the reaction cycle. Several rounds of ATP-dependent interactions between DnaJ, DnaK and GrpE are required for fully efficient folding. Also involved, together with DnaK and GrpE, in the DNA replication of plasmids through activation of initiation proteins. The polypeptide is Chaperone protein DnaJ (Limosilactobacillus reuteri (strain DSM 20016) (Lactobacillus reuteri)).